The chain runs to 133 residues: Capsid protein (133 aa).

Belongs to the Leviviricetes capsid protein family. Homodimer. The capsid protein dimer binds to the viral RNA via an operator hairpin, but also many other RNA sequences in the viral genome.

Its subcellular location is the virion. Capsid protein self-assembles to form an icosahedral capsid with a T=3 symmetry, about 26 nm in diameter, and consisting of 89 capsid proteins dimers (178 capsid proteins). Involved in viral genome encapsidation through the interaction between a capsid protein dimer and the multiple packaging signals present in the RNA genome. Binding of the capsid proteins to the viral RNA induces a conformational change required for efficient T=3 shell formation. The capsid also contains 1 copy of the A2 maturation protein. Functionally, acts as a translational repressor of viral replicase synthesis late in infection. This latter function is the result of capsid protein interaction with an RNA hairpin which contains the replicase ribosome-binding site. The protein is Capsid protein of Escherichia coli.